Consider the following 239-residue polypeptide: Ribonuclease PH (239 aa).

Residues R86 and 124–126 (GTR) contribute to the phosphate site.

This sequence belongs to the RNase PH family. Homohexameric ring arranged as a trimer of dimers.

The catalysed reaction is tRNA(n+1) + phosphate = tRNA(n) + a ribonucleoside 5'-diphosphate. Functionally, phosphorolytic 3'-5' exoribonuclease that plays an important role in tRNA 3'-end maturation. Removes nucleotide residues following the 3'-CCA terminus of tRNAs; can also add nucleotides to the ends of RNA molecules by using nucleoside diphosphates as substrates, but this may not be physiologically important. Probably plays a role in initiation of 16S rRNA degradation (leading to ribosome degradation) during starvation. This Marinomonas sp. (strain MWYL1) protein is Ribonuclease PH.